The following is a 345-amino-acid chain: uncharacterized protein (345 aa).

Belongs to the Gfo/Idh/MocA family. Biliverdin reductase subfamily.

This is an uncharacterized protein from Escherichia coli (strain K12).